The primary structure comprises 205 residues: Small ribosomal subunit protein uS4 (205 aa).

A compositionally biased stretch (basic and acidic residues) spans 1–16 (MSKRESSKYKIDRRMG). A disordered region spans residues 1–46 (MSKRESSKYKIDRRMGENIWGRPKSPVNRREYGPGQHGQRRKGKLS). The 64-residue stretch at 94–157 (SRLDAIVYRA…KQLVIVLEAV (64 aa)) folds into the S4 RNA-binding domain.

It belongs to the universal ribosomal protein uS4 family. Part of the 30S ribosomal subunit. Contacts protein S5. The interaction surface between S4 and S5 is involved in control of translational fidelity.

In terms of biological role, one of the primary rRNA binding proteins, it binds directly to 16S rRNA where it nucleates assembly of the body of the 30S subunit. With S5 and S12 plays an important role in translational accuracy. This is Small ribosomal subunit protein uS4 from Rhizobium johnstonii (strain DSM 114642 / LMG 32736 / 3841) (Rhizobium leguminosarum bv. viciae).